The chain runs to 475 residues: NADH-ubiquinone oxidoreductase chain 2 (475 aa).

A run of 13 helical transmembrane segments spans residues 45–65 (LAVL…GIQY), 82–102 (APIV…LTTT), 112–132 (IALL…VNDL), 133–153 (IPLY…TGVY), 162–182 (AAIL…LSSA), 198–220 (TYYS…ALVF), 240–260 (LYIT…FIYL), 262–282 (IHLF…AVAA), 291–311 (IKSI…TAVL), 318–338 (YIYI…ILAI), 365–385 (LCIA…LPGF), 402–422 (LEAL…AYII), and 447–467 (FIIS…PTLL).

Belongs to the complex I subunit 2 family.

The protein localises to the mitochondrion inner membrane. It carries out the reaction a ubiquinone + NADH + 5 H(+)(in) = a ubiquinol + NAD(+) + 4 H(+)(out). Functionally, core subunit of the mitochondrial membrane respiratory chain NADH dehydrogenase (Complex I) that is believed to belong to the minimal assembly required for catalysis. Complex I functions in the transfer of electrons from NADH to the respiratory chain. The immediate electron acceptor for the enzyme is believed to be ubiquinone. This chain is NADH-ubiquinone oxidoreductase chain 2 (NAD2), found in Candida albicans (strain SC5314 / ATCC MYA-2876) (Yeast).